Consider the following 435-residue polypeptide: Diaminobutyrate--2-oxoglutarate transaminase (435 aa).

K266 is modified (N6-(pyridoxal phosphate)lysine).

This sequence belongs to the class-III pyridoxal-phosphate-dependent aminotransferase family. It depends on pyridoxal 5'-phosphate as a cofactor.

It catalyses the reaction L-2,4-diaminobutanoate + 2-oxoglutarate = L-aspartate 4-semialdehyde + L-glutamate. It functions in the pathway amine and polyamine biosynthesis; ectoine biosynthesis; L-ectoine from L-aspartate 4-semialdehyde: step 1/3. In terms of biological role, catalyzes reversively the conversion of L-aspartate beta-semialdehyde (ASA) to L-2,4-diaminobutyrate (DABA) by transamination with L-glutamate. The polypeptide is Diaminobutyrate--2-oxoglutarate transaminase (ectB) (Bordetella bronchiseptica (strain ATCC BAA-588 / NCTC 13252 / RB50) (Alcaligenes bronchisepticus)).